A 589-amino-acid polypeptide reads, in one-letter code: Probable 9-cis-epoxycarotenoid dioxygenase NCED5, chloroplastic (589 aa).

The transit peptide at M1–S45 directs the protein to the chloroplast. A compositionally biased stretch (low complexity) spans S21 to F34. The tract at residues S21–D51 is disordered. Fe cation contacts are provided by H287, H336, H401, and H576.

This sequence belongs to the carotenoid oxygenase family. As to quaternary structure, interacts in vitro with VAR3. Fe(2+) is required as a cofactor. In terms of tissue distribution, detected only in seeds.

Its subcellular location is the plastid. The protein resides in the chloroplast thylakoid membrane. The enzyme catalyses a 9-cis-epoxycarotenoid + O2 = a 12'-apo-carotenal + 2-cis,4-trans-xanthoxin. It carries out the reaction 9-cis-violaxanthin + O2 = (3S,5R,6S)-5,6-epoxy-3-hydroxy-5,6-dihydro-12'-apo-beta-caroten-12'-al + 2-cis,4-trans-xanthoxin. It catalyses the reaction 9'-cis-neoxanthin + O2 = (3S,5R,6R)-3,5-dihydroxy-6,7-didehydro-5,6-dihydro-12'-apo-beta-caroten-12'-al + 2-cis,4-trans-xanthoxin. Has a 11,12(11',12') 9-cis epoxycarotenoid cleavage activity. Catalyzes the first step of abscisic-acid biosynthesis from carotenoids. This is Probable 9-cis-epoxycarotenoid dioxygenase NCED5, chloroplastic (NCED5) from Arabidopsis thaliana (Mouse-ear cress).